The sequence spans 272 residues: ATP synthase subunit a (272 aa).

5 consecutive transmembrane segments (helical) span residues 41–61 (VLNI…LVLF), 101–121 (VIAP…FMDL), 147–167 (DVNI…FYSI), 221–241 (LIFI…LSVP), and 243–263 (AIFH…LTIV).

It belongs to the ATPase A chain family. F-type ATPases have 2 components, CF(1) - the catalytic core - and CF(0) - the membrane proton channel. CF(1) has five subunits: alpha(3), beta(3), gamma(1), delta(1), epsilon(1). CF(0) has three main subunits: a(1), b(2) and c(9-12). The alpha and beta chains form an alternating ring which encloses part of the gamma chain. CF(1) is attached to CF(0) by a central stalk formed by the gamma and epsilon chains, while a peripheral stalk is formed by the delta and b chains.

It is found in the cell inner membrane. Functionally, key component of the proton channel; it plays a direct role in the translocation of protons across the membrane. This Erwinia tasmaniensis (strain DSM 17950 / CFBP 7177 / CIP 109463 / NCPPB 4357 / Et1/99) protein is ATP synthase subunit a.